The sequence spans 255 residues: Geranylgeranylglyceryl phosphate synthase (255 aa).

Mg(2+) contacts are provided by Asp26 and Ser55. Sn-glycerol 1-phosphate contacts are provided by residues 174–180 (YLEAGSG), 205–206 (GG), and 227–228 (GT).

It belongs to the GGGP/HepGP synthase family. Group II subfamily. It depends on Mg(2+) as a cofactor.

It localises to the cytoplasm. The catalysed reaction is sn-glycerol 1-phosphate + (2E,6E,10E)-geranylgeranyl diphosphate = sn-3-O-(geranylgeranyl)glycerol 1-phosphate + diphosphate. It functions in the pathway membrane lipid metabolism; glycerophospholipid metabolism. In terms of biological role, prenyltransferase that catalyzes the transfer of the geranylgeranyl moiety of geranylgeranyl diphosphate (GGPP) to the C3 hydroxyl of sn-glycerol-1-phosphate (G1P). This reaction is the first ether-bond-formation step in the biosynthesis of archaeal membrane lipids. The polypeptide is Geranylgeranylglyceryl phosphate synthase (Thermococcus sibiricus (strain DSM 12597 / MM 739)).